Consider the following 631-residue polypeptide: Nucleoside triphosphatase I (631 aa).

Positions Phe-42 to Gly-204 constitute a Helicase ATP-binding domain. An ATP-binding site is contributed by His-55–Thr-62. Residues Asp-141–His-144 carry the DEXH box motif. Residues Lys-367 to Lys-532 enclose the Helicase C-terminal domain. The tract at residues Asp-457 to Phe-524 is binding to the cap-specific mRNA (nucleoside-2'-O-)-methyltransferase.

Belongs to the helicase family. NPH I subfamily. In terms of assembly, monomer. Interacts (via C-terminus) with RAP94/OPG109 (via N-terminus). Interacts with the cap-specific mRNA (nucleoside-2'-O-)-methyltransferase OPG102.

It localises to the virion. The catalysed reaction is a ribonucleoside 5'-triphosphate + H2O = a ribonucleoside 5'-diphosphate + phosphate + H(+). Its function is as follows. DNA-dependent ATPase that acts as a 5' to 3' translocase on single-stranded DNA and thereby plays a role in transcription termination of viral early genes. Uses forward translocation in concert with the viral RNA polymerase RAP94/OPG109 subunit and the capping enzyme/VTF to catalyze release of UUUUUNU-containing nascent RNA from the elongation complex. In addition, acts as a positive elongation factor to assist transcription through problematic sequences. The protein is Nucleoside triphosphatase I (OPG123) of Variola virus (isolate Human/India/Ind3/1967) (VARV).